Reading from the N-terminus, the 300-residue chain is Cation-efflux pump FieF (300 aa).

Residues 24–44 traverse the membrane as a helical segment; it reads LLIKIFAWWYTGSVSILAALV. Zn(2+)-binding residues include D45 and D49. 2 helical membrane passes run 82–102 and 114–134; these read AALAQSMFISGSALFLFLTSI and PGVGIGVTVIALICTIILVTF. 2 residues coordinate Zn(2+): H153 and D157. Helical transmembrane passes span 156–176 and 178–198; these read SDVMMNGAILIALGLSWYGWH and ADALFALGIGIYILYSALRMG.

Belongs to the cation diffusion facilitator (CDF) transporter (TC 2.A.4) family. FieF subfamily. As to quaternary structure, homodimer.

The protein localises to the cell inner membrane. The enzyme catalyses Zn(2+)(in) + H(+)(out) = Zn(2+)(out) + H(+)(in). The catalysed reaction is Cd(2+)(in) + H(+)(out) = Cd(2+)(out) + H(+)(in). It catalyses the reaction Fe(2+)(in) + H(+)(out) = Fe(2+)(out) + H(+)(in). Divalent metal cation transporter which exports Zn(2+), Cd(2+) and possibly Fe(2+). May be involved in zinc and iron detoxification by efflux. The protein is Cation-efflux pump FieF of Salmonella schwarzengrund (strain CVM19633).